The primary structure comprises 250 residues: Anti-Pycsar protein Apyc1 (250 aa).

The segment at 19–220 is beta-lactamase-like; it reads YNNNALVKCN…AVQEMIMLMH (202 aa). Positions 61, 63, 65, 66, 146, 166, and 220 each coordinate Zn(2+).

This sequence belongs to the anti-Pycsar protein Apyc1 family. As to quaternary structure, homodimer. Requires Zn(2+) as cofactor.

The enzyme catalyses 3',5'-cyclic CMP + H2O = CMP + H(+). It carries out the reaction 3',5'-cyclic UMP + H2O = UMP + H(+). Counteracts the endogenous Pycsar antiviral defense system. Phosphodiesterase that enables metal-dependent hydrolysis of host cyclic nucleotide Pycsar defense signals such as cCMP and cUMP. The polypeptide is Anti-Pycsar protein Apyc1 (Paenibacillus xerothermodurans).